Consider the following 443-residue polypeptide: KH domain-containing, RNA-binding, signal transduction-associated protein 1 (443 aa).

Positions M1–A94 are disordered. S18 and S20 each carry phosphoserine. N6-acetyllysine is present on K21. Residue S29 is modified to Phosphoserine. Residue T33 is modified to Phosphothreonine. Asymmetric dimethylarginine; by PRMT1 is present on residues R45 and R52. S58 bears the Phosphoserine; by MAPK1 mark. The segment covering T61–P72 has biased composition (pro residues). A phosphothreonine; by MAPK1 mark is found at T71 and T84. The span at S81 to A94 shows a compositional bias: low complexity. Residues K96 and K102 each participate in a glycyl lysine isopeptide (Lys-Gly) (interchain with G-Cter in SUMO2) cross-link. Residues E100–M260 are involved in homodimerization. A Phosphoserine modification is found at S113. K139 is covalently cross-linked (Glycyl lysine isopeptide (Lys-Gly) (interchain with G-Cter in SUMO2)). S150 is modified (phosphoserine). In terms of domain architecture, KH spans N171–V197. The residue at position 175 (K175) is an N6-acetyllysine; alternate. Residue K175 forms a Glycyl lysine isopeptide (Lys-Gly) (interchain with G-Cter in SUMO2); alternate linkage. A Phosphothreonine modification is found at T183. The tract at residues P280 to T317 is disordered. An omega-N-methylarginine mark is found at R282, R284, and R291. Residues G283–A293 show a composition bias toward low complexity. R304 carries the post-translational modification Asymmetric dimethylarginine. Positions G307 to G316 are enriched in low complexity. Omega-N-methylarginine; by PRMT1 is present on residues R310 and R315. The residue at position 320 (R320) is a Dimethylated arginine; alternate. R320 carries the omega-N-methylarginine; by PRMT1; alternate modification. The residue at position 325 (R325) is an Omega-N-methylarginine; by PRMT1. The tract at residues G326–P345 is disordered. 2 positions are modified to dimethylated arginine; alternate: R331 and R340. Omega-N-methylarginine; by PRMT1; alternate occurs at positions 331 and 340. R331 carries the asymmetric dimethylarginine; alternate modification. Residues G351–Y443 form an interaction with HNRNPA1 region. At Y387 the chain carries Phosphotyrosine. S390 carries the phosphoserine modification. Residues G400–R420 form an interaction with ZBTB7A region. Positions Y411 to Y443 are disordered. K432 is covalently cross-linked (Glycyl lysine isopeptide (Lys-Gly) (interchain with G-Cter in SUMO2)). Residues A434–Y443 are compositionally biased toward basic and acidic residues. Phosphotyrosine; by PTK6 is present on residues Y435, Y440, and Y443.

The protein belongs to the KHDRBS family. As to quaternary structure, self-associates to form homooligomers when bound to RNA, oligomerization appears to be limited when binding to proteins. Forms a trimeric complex in the nucleus consisting of BANP, HDAC6 and KHDRBS1/SAM68; HDAC6 keeps KHDRBS1 in a deacetylated state which inhibits the inclusion of CD44 alternate exons. The complex is disrupted by MAPK1/MAPK3-mediated phosphorylation of BANP which results in BANP export to the cytoplasm. This facilitates acetylation of KHDRBS1 and CD44 variant exon inclusion. Interacts with KHDRBS3/SLIM-2 and KHDRBS2/SLIM-1; heterooligomer formation of KHDRBS family proteins may modulate RNA substrate specificity. Interacts with RASA1, FYN, GRB2, PLCG1, SRC, CBP and PRMT1. Interacts with PTK6 (via SH3 and SH2 domains). Forms a complex with ILF2, ILF3, YLPM1, RBMX, NCOA5 and PPP1CA. Binds WBP4/FBP21 (via WW domains), FNBP4/FBP30 (via WW domains). Interacts (via Arg/Gly-rich-flanked Pro-rich regions) with FYN (via the SH3 domain). Interacts with APC, HNRNPA1. Interacts with the non-receptor tyrosine kinase SRMS; the interaction leads to phosphorylation of KHDRBS1. Interacts with ZBTB7A; negatively regulates KHDRBS1 splicing activity toward BCL2L1. In terms of processing, tyrosine phosphorylated by several non-receptor tyrosine kinases including LCK, FYN and JAK3. Also tyrosine phosphorylated by the non-receptor tyrosine kinase SRMS in an EGF-dependent manner. Phosphorylation by PTK6 negatively regulates its RNA binding ability. Phosphorylation by PTK6 at Tyr-440 dictates the nuclear localization of KHDRBS1. Phosphorylation by MAPK1 at Ser-58, Thr-71 and Thr-84 regulates CD44 alternative splicing by promoting CD44 exon v5 inclusion. Acetylated. Positively correlates with ability to bind RNA. Deacetylated by HDAC6; this regulates alternative splicing by inhibiting the inclusion of CD44 alternate exons. Post-translationally, arginine methylation is required for nuclear localization. Inhibits interaction with Src-like SH3 domains, but not interaction with WW domains of WBP4/FBP21 and FNBP4/FBP30. As to expression, in adult cerebellum expressed in most neuronal cell populations, specifically in cerebellar granule cells of the internal granular layer, ROR(alpha)-positive Purkinje cells, internal granular layer and molecular layer interneurons (at protein level).

It localises to the nucleus. It is found in the cytoplasm. The protein resides in the membrane. Recruited and tyrosine phosphorylated by several receptor systems, for example the T-cell, leptin and insulin receptors. Once phosphorylated, functions as an adapter protein in signal transduction cascades by binding to SH2 and SH3 domain-containing proteins. Role in G2-M progression in the cell cycle. Represses CBP-dependent transcriptional activation apparently by competing with other nuclear factors for binding to CBP. Also acts as a putative regulator of mRNA stability and/or translation rates and mediates mRNA nuclear export. Positively regulates the association of constitutive transport element (CTE)-containing mRNA with large polyribosomes and translation initiation. May not be involved in the nucleocytoplasmic export of unspliced (CTE)-containing RNA species. RNA-binding protein that plays a role in the regulation of alternative splicing and influences mRNA splice site selection and exon inclusion. Binds to RNA containing 5'-[AU]UAA-3' as a bipartite motif spaced by more than 15 nucleotides. Binds poly(A). In cooperation with HNRNPA1 modulates alternative splicing of BCL2L1 by promoting splicing toward isoform Bcl-X(S), and of SMN1. Can regulate CD44 alternative splicing in a Ras pathway-dependent manner. Can regulate alternative splicing of NRXN1 and NRXN3 in the laminin G-like domain 6 containing the evolutionary conserved neurexin alternative spliced segment 4 (AS4) involved in neurexin selective targeting to postsynaptic partners. In a neuronal activity-dependent manner cooperates synergistically with KHDRBS2/SLIM-1 in regulation of NRXN1 exon skipping at AS4. The cooperation with KHDRBS2/SLIM-1 is antagonistic for regulation of NXRN3 alternative splicing at AS4. The protein is KH domain-containing, RNA-binding, signal transduction-associated protein 1 of Mus musculus (Mouse).